The primary structure comprises 392 residues: Tryptophan synthase beta chain (392 aa).

Residue Lys-86 is modified to N6-(pyridoxal phosphate)lysine.

The protein belongs to the TrpB family. Tetramer of two alpha and two beta chains. Requires pyridoxal 5'-phosphate as cofactor.

The enzyme catalyses (1S,2R)-1-C-(indol-3-yl)glycerol 3-phosphate + L-serine = D-glyceraldehyde 3-phosphate + L-tryptophan + H2O. Its pathway is amino-acid biosynthesis; L-tryptophan biosynthesis; L-tryptophan from chorismate: step 5/5. The beta subunit is responsible for the synthesis of L-tryptophan from indole and L-serine. This is Tryptophan synthase beta chain (trpB) from Buchnera aphidicola subsp. Schlechtendalia chinensis.